The primary structure comprises 440 residues: L-seryl-tRNA(Sec) selenium transferase (440 aa).

Position 282 is an N6-(pyridoxal phosphate)lysine (Lys-282).

The protein belongs to the SelA family. Pyridoxal 5'-phosphate is required as a cofactor.

It localises to the cytoplasm. It carries out the reaction L-seryl-tRNA(Sec) + selenophosphate + H(+) = L-selenocysteinyl-tRNA(Sec) + phosphate. It participates in aminoacyl-tRNA biosynthesis; selenocysteinyl-tRNA(Sec) biosynthesis; selenocysteinyl-tRNA(Sec) from L-seryl-tRNA(Sec) (bacterial route): step 1/1. Its function is as follows. Converts seryl-tRNA(Sec) to selenocysteinyl-tRNA(Sec) required for selenoprotein biosynthesis. The chain is L-seryl-tRNA(Sec) selenium transferase from Campylobacter jejuni (strain RM1221).